Reading from the N-terminus, the 98-residue chain is NADH-ubiquinone oxidoreductase chain 4L (98 aa).

The next 3 helical transmembrane spans lie at 2 to 22 (TLTT…TLIF), 29 to 49 (TLLC…ITAL), and 61 to 81 (ITTL…LTMV).

It belongs to the complex I subunit 4L family. As to quaternary structure, core subunit of respiratory chain NADH dehydrogenase (Complex I) which is composed of 45 different subunits.

It is found in the mitochondrion inner membrane. The enzyme catalyses a ubiquinone + NADH + 5 H(+)(in) = a ubiquinol + NAD(+) + 4 H(+)(out). In terms of biological role, core subunit of the mitochondrial membrane respiratory chain NADH dehydrogenase (Complex I) which catalyzes electron transfer from NADH through the respiratory chain, using ubiquinone as an electron acceptor. Part of the enzyme membrane arm which is embedded in the lipid bilayer and involved in proton translocation. The polypeptide is NADH-ubiquinone oxidoreductase chain 4L (MT-ND4L) (Oxymycterus rufus (Red hocicudo)).